Reading from the N-terminus, the 472-residue chain is Methylenetetrahydrofolate--tRNA-(uracil-5-)-methyltransferase TrmFO (472 aa).

Position 10-15 (10-15) interacts with FAD; sequence GGGLAG.

The protein belongs to the MnmG family. TrmFO subfamily. FAD is required as a cofactor.

It is found in the cytoplasm. It carries out the reaction uridine(54) in tRNA + (6R)-5,10-methylene-5,6,7,8-tetrahydrofolate + NADH + H(+) = 5-methyluridine(54) in tRNA + (6S)-5,6,7,8-tetrahydrofolate + NAD(+). It catalyses the reaction uridine(54) in tRNA + (6R)-5,10-methylene-5,6,7,8-tetrahydrofolate + NADPH + H(+) = 5-methyluridine(54) in tRNA + (6S)-5,6,7,8-tetrahydrofolate + NADP(+). In terms of biological role, catalyzes the folate-dependent formation of 5-methyl-uridine at position 54 (M-5-U54) in all tRNAs. The sequence is that of Methylenetetrahydrofolate--tRNA-(uracil-5-)-methyltransferase TrmFO from Mesorhizobium japonicum (strain LMG 29417 / CECT 9101 / MAFF 303099) (Mesorhizobium loti (strain MAFF 303099)).